The primary structure comprises 165 residues: Ribosome maturation factor RimM (165 aa).

One can recognise a PRC barrel domain in the interval 89–161; that stretch reads EADTHYIVDL…KIVVKPVRQW (73 aa).

This sequence belongs to the RimM family. As to quaternary structure, binds ribosomal protein uS19.

It is found in the cytoplasm. Functionally, an accessory protein needed during the final step in the assembly of 30S ribosomal subunit, possibly for assembly of the head region. Essential for efficient processing of 16S rRNA. May be needed both before and after RbfA during the maturation of 16S rRNA. It has affinity for free ribosomal 30S subunits but not for 70S ribosomes. The sequence is that of Ribosome maturation factor RimM from Clostridium botulinum (strain Alaska E43 / Type E3).